Consider the following 303-residue polypeptide: MSKGKKIFAIIFGIILVLFLAVVGMGAKLYWDVSKSMDKTYETVERSKKSQVNLNNKEPFSVLLLGIDTGDDGRVEQGRSDTTIVATVNPRDKQTTLVSLARDTYVDIPGQGKQDKLNHAYAFGGASLAMDTVENYLNIPINHYVSINMAGLKELVNAVGGIEVNNNLTFSQDGYDFTIGKISLDGEQALSYSRMRYEDPNGDYGRQERQRKVIEGIVQKVLSLNSVSNYQEILTAVSDNMKTDLSFDDMKKIALDYRSAFGKVKQDQLQGTGFMQDGVSYQRVDEQELTRVQQELKNQLNTK.

The Cytoplasmic portion of the chain corresponds to 1–6 (MSKGKK). Residues 7 to 27 (IFAIIFGIILVLFLAVVGMGA) form a helical; Signal-anchor for type II membrane protein membrane-spanning segment. The Extracellular portion of the chain corresponds to 28 to 303 (KLYWDVSKSM…QELKNQLNTK (276 aa)).

It belongs to the LytR/CpsA/Psr (LCP) family.

The protein resides in the cell membrane. Its pathway is cell wall biogenesis. Its function is as follows. May catalyze the final step in cell wall teichoic acid biosynthesis, the transfer of the anionic cell wall polymers (APs) from their lipid-linked precursor to the cell wall peptidoglycan (PG). The chain is Polyisoprenyl-teichoic acid--peptidoglycan teichoic acid transferase TagU from Enterococcus faecalis (strain ATCC 700802 / V583).